Reading from the N-terminus, the 280-residue chain is Probable endonuclease 4 (280 aa).

9 residues coordinate Zn(2+): histidine 68, histidine 108, glutamate 143, aspartate 177, histidine 180, histidine 214, aspartate 227, histidine 229, and glutamate 259.

This sequence belongs to the AP endonuclease 2 family. It depends on Zn(2+) as a cofactor.

The enzyme catalyses Endonucleolytic cleavage to 5'-phosphooligonucleotide end-products.. In terms of biological role, endonuclease IV plays a role in DNA repair. It cleaves phosphodiester bonds at apurinic or apyrimidinic (AP) sites, generating a 3'-hydroxyl group and a 5'-terminal sugar phosphate. This Cenarchaeum symbiosum (strain A) protein is Probable endonuclease 4.